The following is a 235-amino-acid chain: tRNA (guanine-N(1)-)-methyltransferase (235 aa).

S-adenosyl-L-methionine-binding positions include G112 and 132 to 137; that span reads LGDFVL.

This sequence belongs to the RNA methyltransferase TrmD family. Homodimer.

It localises to the cytoplasm. The catalysed reaction is guanosine(37) in tRNA + S-adenosyl-L-methionine = N(1)-methylguanosine(37) in tRNA + S-adenosyl-L-homocysteine + H(+). Functionally, specifically methylates guanosine-37 in various tRNAs. In Acaryochloris marina (strain MBIC 11017), this protein is tRNA (guanine-N(1)-)-methyltransferase.